We begin with the raw amino-acid sequence, 308 residues long: Tyrosine recombinase XerC (308 aa).

One can recognise a Core-binding (CB) domain in the interval 20 to 101; that stretch reads SKLHTLIDDF…SVKAFSSWAQ (82 aa). The region spanning 122–302 is the Tyr recombinase domain; that stretch reads DLPKILGEQQ…SNKRLLEAFN (181 aa). Catalysis depends on residues arginine 163, lysine 187, histidine 254, arginine 257, and histidine 280. Tyrosine 289 serves as the catalytic O-(3'-phospho-DNA)-tyrosine intermediate.

It belongs to the 'phage' integrase family. XerC subfamily. Forms a cyclic heterotetrameric complex composed of two molecules of XerC and two molecules of XerD.

The protein localises to the cytoplasm. In terms of biological role, site-specific tyrosine recombinase, which acts by catalyzing the cutting and rejoining of the recombining DNA molecules. The XerC-XerD complex is essential to convert dimers of the bacterial chromosome into monomers to permit their segregation at cell division. It also contributes to the segregational stability of plasmids. This Corynebacterium glutamicum (strain ATCC 13032 / DSM 20300 / JCM 1318 / BCRC 11384 / CCUG 27702 / LMG 3730 / NBRC 12168 / NCIMB 10025 / NRRL B-2784 / 534) protein is Tyrosine recombinase XerC.